The primary structure comprises 321 residues: Torsin-2A (321 aa).

Positions 1–26 (MAAATRGCRPWGSLLGLLGLVSAAAA) are cleaved as a signal peptide. 93 to 100 (GWTGTGKS) contributes to the ATP binding site. A glycan (N-linked (GlcNAc...) asparagine) is linked at Asn-149.

Belongs to the ClpA/ClpB family. Torsin subfamily. As to quaternary structure, homohexamer. Interacts with TOR1AIP1. Isoform 1 is expressed ubiquitously, except in cardiac and endothelial tissues.

It localises to the endoplasmic reticulum lumen. The polypeptide is Torsin-2A (TOR2A) (Homo sapiens (Human)).